The chain runs to 331 residues: NADH-cytochrome b5 reductase 2 (331 aa).

The chain crosses the membrane as a helical span at residues 36 to 56 (VGILIASAVGMAGFGTYFMFG). The 106-residue stretch at 80–185 (KGFVSLQLDD…KGPLPKYEWS (106 aa)) folds into the FAD-binding FR-type domain. 188–223 (KHPHVAMIAGGTGITPMYQIMRAIFKNPADKTKVTL) contacts FAD.

The protein belongs to the flavoprotein pyridine nucleotide cytochrome reductase family. Requires FAD as cofactor.

It is found in the mitochondrion outer membrane. It carries out the reaction 2 Fe(III)-[cytochrome b5] + NADH = 2 Fe(II)-[cytochrome b5] + NAD(+) + H(+). Functionally, may mediate the reduction of outer membrane cytochrome b5. This is NADH-cytochrome b5 reductase 2 (MCR1) from Pyricularia oryzae (strain 70-15 / ATCC MYA-4617 / FGSC 8958) (Rice blast fungus).